The following is a 408-amino-acid chain: Serine/threonine transporter SstT (408 aa).

The next 9 helical transmembrane spans lie at 11 to 31 (LANG…VSLA), 43 to 63 (FLGS…VFIL), 82 to 102 (IVVL…LLSM), 141 to 161 (ALMT…GLAL), 192 to 212 (IGIF…AIAG), 216 to 236 (LLAV…PLIV), 298 to 318 (MGGA…TLGI), 339 to 359 (ASGV…LFGI), and 363 to 383 (VAMQ…AAET).

The protein belongs to the dicarboxylate/amino acid:cation symporter (DAACS) (TC 2.A.23) family.

The protein localises to the cell inner membrane. The enzyme catalyses L-serine(in) + Na(+)(in) = L-serine(out) + Na(+)(out). It carries out the reaction L-threonine(in) + Na(+)(in) = L-threonine(out) + Na(+)(out). Functionally, involved in the import of serine and threonine into the cell, with the concomitant import of sodium (symport system). This Shewanella sp. (strain MR-7) protein is Serine/threonine transporter SstT.